Consider the following 306-residue polypeptide: Tyrosine recombinase EUBREC_2677 (306 aa).

In terms of domain architecture, Core-binding (CB) spans 2–84 (NNLQTHISSY…SIKAFFHYLE (83 aa)). One can recognise a Tyr recombinase domain in the interval 106-296 (ILPKTIPLYI…AVSKQKDILI (191 aa)). Residues Arg-155, Lys-179, His-248, Arg-251, and His-274 contribute to the active site. The active-site O-(3'-phospho-DNA)-tyrosine intermediate is Tyr-283.

Belongs to the 'phage' integrase family.

It is found in the cytoplasm. Its function is as follows. Site-specific tyrosine recombinase, which acts by catalyzing the cutting and rejoining of the recombining DNA molecules. The polypeptide is Tyrosine recombinase EUBREC_2677 (Agathobacter rectalis (strain ATCC 33656 / DSM 3377 / JCM 17463 / KCTC 5835 / VPI 0990) (Eubacterium rectale)).